We begin with the raw amino-acid sequence, 138 residues long: Putative pre-16S rRNA nuclease (138 aa).

Belongs to the YqgF nuclease family.

The protein resides in the cytoplasm. Its function is as follows. Could be a nuclease involved in processing of the 5'-end of pre-16S rRNA. This Porphyromonas gingivalis (strain ATCC BAA-308 / W83) protein is Putative pre-16S rRNA nuclease.